We begin with the raw amino-acid sequence, 131 residues long: MNPAYRKAMLESEIQKLLMEALQQLRDPRLKKDFVTFSRVELSKDKRYADVYVSFLGTPEERKETVEILNRAKGFFRTFIAKNLRLYVAPEIRFYEDKGIEASVKVHQLLVQLGYDPLKDKEKKEEEKKEE.

It belongs to the RbfA family. Monomer. Binds 30S ribosomal subunits, but not 50S ribosomal subunits or 70S ribosomes.

The protein localises to the cytoplasm. In terms of biological role, one of several proteins that assist in the late maturation steps of the functional core of the 30S ribosomal subunit. Associates with free 30S ribosomal subunits (but not with 30S subunits that are part of 70S ribosomes or polysomes). Required for efficient processing of 16S rRNA. May interact with the 5'-terminal helix region of 16S rRNA. This chain is Ribosome-binding factor A, found in Thermotoga sp. (strain RQ2).